Reading from the N-terminus, the 408-residue chain is Leucine aminopeptidase 1 (408 aa).

A signal peptide spans 1–16; it reads MKVSSAIALLLPVVAA. A propeptide spanning residues 17–89 is cleaved from the precursor; the sequence is RFVDSAFEQD…SAQSATTGPA (73 aa). N-linked (GlcNAc...) asparagine glycans are attached at residues asparagine 95, asparagine 108, and asparagine 182. Residues histidine 190, aspartate 209, glutamate 248, and aspartate 275 each coordinate Zn(2+). Residues cysteine 324 and cysteine 328 are joined by a disulfide bond. Residue histidine 357 coordinates Zn(2+).

It belongs to the peptidase M28 family. M28E subfamily. As to quaternary structure, monomer. Zn(2+) serves as cofactor.

It is found in the secreted. Extracellular aminopeptidase that allows assimilation of proteinaceous substrates. This is Leucine aminopeptidase 1 (LAP1) from Grosmannia clavigera (strain kw1407 / UAMH 11150) (Blue stain fungus).